Consider the following 363-residue polypeptide: Aminomethyltransferase (363 aa).

It belongs to the GcvT family. As to quaternary structure, the glycine cleavage system is composed of four proteins: P, T, L and H.

The enzyme catalyses N(6)-[(R)-S(8)-aminomethyldihydrolipoyl]-L-lysyl-[protein] + (6S)-5,6,7,8-tetrahydrofolate = N(6)-[(R)-dihydrolipoyl]-L-lysyl-[protein] + (6R)-5,10-methylene-5,6,7,8-tetrahydrofolate + NH4(+). The glycine cleavage system catalyzes the degradation of glycine. This is Aminomethyltransferase from Staphylococcus saprophyticus subsp. saprophyticus (strain ATCC 15305 / DSM 20229 / NCIMB 8711 / NCTC 7292 / S-41).